The sequence spans 735 residues: F-box and leucine-rich repeat protein 13 (735 aa).

The F-box domain maps to 152-198 (KCDISLLPERAILQIFFYLSLKDVIICGQVNHAWMLMTQLNSLWNAI). 17 LRR repeats span residues 230-254 (GCLLRPKTFRSVSHCRNLQELNVSD), 255-280 (CPTFTDESMRHISEGCPGVLCLNLSN), 281-305 (TTITNRTMRLLPRHFHNLQNLSLAY), 306-333 (CRRFTDKGLQYLNLGNGCHKLIYLDLSG), 334-359 (CTQISVQGFRYIANSCTGIMHLTIND), 360-385 (MPTLTDNCVKALVEKCSRITSLVFTG), 386-406 (APHISDCTFRALSACKLRKIR), 410-435 (NKRVTDASFKFIDKNYPNLSHIYMAD), 436-460 (CKGITDSSLRSLSPLKQLTVLNLAN), 461-488 (CVRIGDMGLKQFLDGPASMRIRELNLSN), 489-514 (CVRLSDASVMKLSERCPNLNYLSLRN), 515-538 (CEHLTAQGIGYIVNIFSLVSIDLS), 539-563 (GTDISNEGLNVLSRHKKLKELSVSE), 564-589 (CYRITDDGIQAFCKSSLILEHLDVSY), 590-615 (CSQLSDMIIKALAIYCINLTSLSIAG), 616-641 (CPKITDSAMEMLSAKCHYLHILDISG), and 642-667 (CVLLTDQILEDLQIGCKQLRILKMQY). Residues 682–692 (KVQQQEYNTND) are compositionally biased toward polar residues. Residues 682–703 (KVQQQEYNTNDPPRWFGYDREG) form a disordered region.

The protein belongs to the DRC6 family. As to quaternary structure, component of the nexin-dynein regulatory complex (N-DRC). Directly interacts with SKP1 and CUL1. Interacts with TCTE1/DRC5.

The protein resides in the cytoplasm. It is found in the cytoskeleton. It localises to the flagellum axoneme. Its subcellular location is the microtubule organizing center. The protein localises to the centrosome. In terms of biological role, substrate-recognition component of the SCF (SKP1-CUL1-F-box protein)-type E3 ubiquitin ligase complex. Component of the nexin-dynein regulatory complex (N-DRC), a key regulator of ciliary/flagellar motility which maintains the alignment and integrity of the distal axoneme and regulates microtubule sliding in motile axonemes. Specifically targets CEP192 isoform 3 for ubiquitin-mediated proteolysis and thereby acts as a regulator of microtubule nucleation activity. The polypeptide is F-box and leucine-rich repeat protein 13 (FBXL13) (Homo sapiens (Human)).